The chain runs to 499 residues: GTPase Der (499 aa).

EngA-type G domains lie at 3–166 (PVVA…LETL) and 213–386 (IKFA…QSAT). GTP contacts are provided by residues 9 to 16 (GRPNVGKS), 56 to 60 (DTGGI), 118 to 121 (NKTD), 219 to 226 (GRPNVGKS), 266 to 270 (DTAGV), and 331 to 334 (NKWD). Residues 387-471 (RRTSTAMLTR…PIRVEFQESA (85 aa)) form the KH-like domain. The interval 476 to 499 (GRKNTMTLSQERQRKRLLKAKTKK) is disordered. Positions 488-499 (QRKRLLKAKTKK) are enriched in basic residues.

This sequence belongs to the TRAFAC class TrmE-Era-EngA-EngB-Septin-like GTPase superfamily. EngA (Der) GTPase family. Associates with the 50S ribosomal subunit.

Its function is as follows. GTPase that plays an essential role in the late steps of ribosome biogenesis. In Aeromonas salmonicida (strain A449), this protein is GTPase Der.